A 207-amino-acid chain; its full sequence is Uridine kinase (207 aa).

11-18 contacts ATP; that stretch reads GGSGSGKT.

It belongs to the uridine kinase family.

It localises to the cytoplasm. The enzyme catalyses uridine + ATP = UMP + ADP + H(+). It catalyses the reaction cytidine + ATP = CMP + ADP + H(+). The protein operates within pyrimidine metabolism; CTP biosynthesis via salvage pathway; CTP from cytidine: step 1/3. Its pathway is pyrimidine metabolism; UMP biosynthesis via salvage pathway; UMP from uridine: step 1/1. In Staphylococcus aureus (strain Mu3 / ATCC 700698), this protein is Uridine kinase.